The following is a 1260-amino-acid chain: MGKDQELLEAARTGNVALVEKLLSGRKGGILGGGSGPLPLSNLLSIWRGPNVNCTDSSGYTALHHAALNGHKDIVLKLLQFEASTNVADNKGYFPIHLAAWKGDVEIVKILIHHGPSHSRVNEQNNENETALHCAAQYGHSEVVAVLLEELTDPTIRNSKLETPLDLAALYGRLRVVKMIISAHPNLMSCNTRKHTPLHLAARNGHKAVVQVLLEAGMDVSCQTEKGSALHEAALFGKVDVVRVLLETGIDANIKDSLGRTVLDILKEHPSQKSLQIATLLQDYLEGVGRSVVLEEEHAQEDTAQETRLSSPAQSPSQKTKSETVTGELSKLLDEIKLCQEKDYSFEDLCHTISDHYLDNLSKISEEELGKNGSQSVRTSSTINLSPGEVEDEEEDPNSCGPTGLWEALTPCNGCRNLGFPMLAQESYPKKRNYPMEIVPSASLDTFPSENENFLCELVDTAVTKKPCSLEIARAPSPRTDNASEVAITAPGTGHHRNSSTGPTPDCSPPSPDTALKNIVKVIRPQPKQRTSIVSSLDFQRMNHNQEYFEISTSTGCTSFTSSPPVSPPTSSVETTEIKNEGAEHTDDLSQQEDDEPPKEYDAGQFAGLLHGSSPACEAPENPFHLYGKRNQGEDGQEEASLANSPLPFKQTPIENNPEPSVKKIKPKVVSRTIFHKRSHQLENHTIVGTRMSRGGSRNGDQWGVNPGGFVERACTLGRIRSLPKALIDMHLSKNVSKSDSDLIAYPSKDKARVNWSKSSTAERSSKDNSERTPSFTSEWEEIDKIMNSIDVGINSELEGMNGEATRPRCPVQTVGQWLESIGLPQYENHLTANGFDNVQFMGSNVMEDQDLLEIGILNSGHRQRILQAIQLLPKMRPIGHDGYHPTSVAEWLDSIELGDYTKAFLINGYTSMDLLKKIWELELINVLKISLIGHRKRILASLGDRLHEDPPQKPPRSITLREPSGNHTPPQLSPSLSQSTYTTGGSLDVPHIIMQGDARRRRNENYFDDIPRSKLERQMAQTGDWGEPSITLRPPNEATASTPVQYWQHHPEKLIFQSCDYKAFYLGSMLIKELRGTESTQDACAKMRANCQKSTEQMKKVPTIILSVSYKGVKFIDAANKNIIAEHEIRNISCAAQDPEDLSTFAYITKDLKSNHHYCHVFTAFDVNLAYEIILTLGQAFEVAYQLALQARKGGHSSTLPESFENKPSKPIPKPRVSIRKSVQIDPSEQKTLANLPWIVEPGQEAKRGINTKYETTIF.

ANK repeat units follow at residues 2 to 31 (GKDQ…GGIL), 58 to 87 (SGYT…STNV), 91 to 120 (KGYF…SHSR), 127 to 156 (ENET…DPTI), 160 to 189 (KLET…NLMS), 193 to 222 (RKHT…DVSC), and 225 to 254 (EKGS…DANI). Positions 298–326 (HAQEDTAQETRLSSPAQSPSQKTKSETVT) are disordered. The segment covering 306–326 (ETRLSSPAQSPSQKTKSETVT) has biased composition (polar residues). 5 positions are modified to phosphoserine: S310, S311, S315, S354, and S365. 3 disordered regions span residues 368 to 402 (ELGK…SCGP), 491 to 513 (PGTG…PSPD), and 556 to 642 (GCTS…EASL). The span at 372–385 (NGSQSVRTSSTINL) shows a compositional bias: polar residues. Residue T504 is modified to Phosphothreonine. S508 and S511 each carry phosphoserine. Over residues 556–575 (GCTSFTSSPPVSPPTSSVET) the composition is skewed to low complexity. Basic and acidic residues predominate over residues 576 to 588 (TEIKNEGAEHTDD). The residue at position 739 (S739) is a Phosphoserine. The segment at 754-778 (VNWSKSSTAERSSKDNSERTPSFTS) is disordered. T773 carries the post-translational modification Phosphothreonine. Residue S775 is modified to Phosphoserine. 2 SAM domains span residues 810-876 (CPVQ…LPKM) and 884-949 (YHPT…RLHE). At Y901 the chain carries Phosphotyrosine. The Nuclear localization signal signature appears at 935-938 (HRKR). The tract at residues 946-989 (RLHEDPPQKPPRSITLREPSGNHTPPQLSPSLSQSTYTTGGSLD) is disordered. Positions 969-984 (TPPQLSPSLSQSTYTT) are enriched in low complexity. A Phosphoserine modification is found at S974. Phosphotyrosine is present on Y1007. The 158-residue stretch at 1056-1213 (IFQSCDYKAF…SFENKPSKPI (158 aa)) folds into the PID domain. The interval 1197–1217 (HSSTLPESFENKPSKPIPKPR) is disordered.

In terms of assembly, interacts with EPHA8. Isoform 2 interacts with COIL. Isoform 3 interacts with DLG4. Nuclear translocation of isoform 3 requires an NMDAR-dependent proteolytic cleavage. A 35 kDa N-terminal form shuttles to the nucleus. Isoform 3 is brain specific and highly enriched in the postsynaptic densities (PSDs), especially in cortical, striatal and hippocampal PSDs.

It is found in the cytoplasm. The protein resides in the nucleus. It localises to the postsynaptic density. Its subcellular location is the cell projection. The protein localises to the dendritic spine. It is found in the cajal body. In terms of biological role, isoform 2 may participate in the regulation of nucleoplasmic coilin protein interactions in neuronal and transformed cells. Functionally, isoform 3 can regulate global protein synthesis by altering nucleolar numbers. This Rattus norvegicus (Rat) protein is Ankyrin repeat and sterile alpha motif domain-containing protein 1B (Anks1b).